The sequence spans 395 residues: Vomeronasal type-1 receptor 2 (395 aa).

The helical transmembrane segment at 12–32 (LYPINISAAWHLGPLPVSCFV) threads the bilayer. Over 33-51 (SNKYQCSLAFGATTGLRVL) the chain is Extracellular. The chain crosses the membrane as a helical span at residues 52-72 (VVVVPQTQLSFLSSLCLVSLF). Over 73–93 (LHSLVSAHGEKPTKPVGLDPT) the chain is Cytoplasmic. The chain crosses the membrane as a helical span at residues 94–114 (LFQVVVGILGNFSLLYYYMFL). Over 115–170 (YFRGYKPRSTDLILRHLTVADSLVILSKRIPETMATFGLKHFDNYFGCKFLLYAHR) the chain is Extracellular. The chain crosses the membrane as a helical span at residues 171-191 (VGRGVSIGSTCLLSVFQVITI). The Cytoplasmic segment spans residues 192-208 (NPRNSRWAEMKVKAPTY). A helical transmembrane segment spans residues 209–229 (IGLSNILCWAFHMLVNAIFPI). Topologically, residues 230–267 (YTTGKWSNNNITKKGDLGYCSAPLSDEVTKSVYAALTS) are extracellular. N239 carries N-linked (GlcNAc...) asparagine glycosylation. Residues 268–288 (FHDVLCLGLMLWASSSIVLVL) form a helical membrane-spanning segment. Topologically, residues 289-316 (YRHKQQVQHICRNNLYPNSSPGNRAIQS) are cytoplasmic. Residues 317–337 (ILALVSTFALCYALSFITYVY) form a helical membrane-spanning segment. Over 338-346 (LALFDNSSW) the chain is Extracellular. N-linked (GlcNAc...) asparagine glycosylation occurs at N343. The helical transmembrane segment at 347-367 (WLVNTAALIIACFPTISPFVL) threads the bilayer. The Cytoplasmic segment spans residues 368–395 (MCRDPSRSRLCSICCRRNRRFFHDFRKM).

This sequence belongs to the G-protein coupled receptor 1 family.

It is found in the cell membrane. Its function is as follows. Putative pheromone receptor. This chain is Vomeronasal type-1 receptor 2 (VN1R2), found in Homo sapiens (Human).